A 434-amino-acid chain; its full sequence is 5'-deoxyadenosine deaminase (434 aa).

2 residues coordinate Zn(2+): histidine 63 and histidine 65. 2 residues coordinate substrate: glutamate 92 and histidine 184. Zn(2+) is bound at residue histidine 211. Substrate is bound by residues glutamate 214 and aspartate 299. Aspartate 299 provides a ligand contact to Zn(2+).

This sequence belongs to the metallo-dependent hydrolases superfamily. MTA/SAH deaminase family. As to quaternary structure, homotetramer. The cofactor is Zn(2+).

The catalysed reaction is 5'-deoxyadenosine + H2O + H(+) = 5'-deoxyinosine + NH4(+). It catalyses the reaction S-adenosyl-L-homocysteine + H2O + H(+) = S-inosyl-L-homocysteine + NH4(+). The enzyme catalyses S-methyl-5'-thioadenosine + H2O + H(+) = S-methyl-5'-thioinosine + NH4(+). It carries out the reaction adenosine + H2O + H(+) = inosine + NH4(+). The protein operates within amino-acid biosynthesis; S-adenosyl-L-methionine biosynthesis. Functionally, catalyzes the deamination of three SAM-derived enzymatic products, namely 5'-deoxyadenosine, S-adenosyl-L-homocysteine, and 5'-methylthioadenosine, to produce the inosine analogs. Can also deaminate adenosine. The preferred substrate for this enzyme is 5'-deoxyadenosine, but all these substrates are efficiently deaminated. Likely functions in a S-adenosyl-L-methionine (SAM) recycling pathway from S-adenosyl-L-homocysteine (SAH) produced from SAM-dependent methylation reactions. May also be involved in the recycling of 5'-deoxyadenosine, whereupon the 5'-deoxyribose moiety of 5'-deoxyinosine is further metabolized to deoxyhexoses used for the biosynthesis of aromatic amino acids in methanogens. In Methanococcoides burtonii (strain DSM 6242 / NBRC 107633 / OCM 468 / ACE-M), this protein is 5'-deoxyadenosine deaminase.